Consider the following 393-residue polypeptide: Triacylglycerol lipase 1 (393 aa).

An N-terminal signal peptide occupies residues 1-20 (MKWLLVAVLTSLTIFSALTQ). N-linked (GlcNAc...) asparagine glycosylation occurs at N41. Catalysis depends on S166, which acts as the Nucleophile. A glycan (N-linked (GlcNAc...) asparagine) is linked at N261. Active-site charge relay system residues include D334 and H363.

Belongs to the AB hydrolase superfamily. Lipase family. In terms of tissue distribution, expressed in seedlings, roots, leaves, flowers and siliques. Specifically expressed in the epidermis.

The protein resides in the secreted. It carries out the reaction a triacylglycerol + H2O = a diacylglycerol + a fatty acid + H(+). It catalyses the reaction 1,2,3-tributanoylglycerol + H2O = dibutanoylglycerol + butanoate + H(+). The catalysed reaction is 1,2,3-trioctanoylglycerol + H2O = dioctanoylglycerol + octanoate + H(+). The protein operates within lipid metabolism; glycerolipid metabolism. Triacylglycerol (TAG) lipase active on triolein, trioctanoin, tributyrin and 1,3-Diolein, but not on phospho- and galactolipids. Involved but dispensable for TAG storage breakdown during seed germination. This chain is Triacylglycerol lipase 1, found in Arabidopsis thaliana (Mouse-ear cress).